The following is a 303-amino-acid chain: Trans-enoyl reductase tazE (303 aa).

Residues 1 to 26 are disordered; it reads MTAEHDAAILPKPGGPLAVGKRATPE. Residue 44–49 coordinates NADP(+); the sequence is CDYYQR. 136-143 provides a ligand contact to substrate; the sequence is LAVLTALT. NADP(+) is bound by residues 170-173, 193-196, Tyr211, and 246-247; these read SSSV, SPKH, and LD. 265–269 contributes to the substrate binding site; sequence VLPEC.

The protein belongs to the zinc-containing alcohol dehydrogenase family.

It functions in the pathway secondary metabolite biosynthesis. Functionally, trans-enoyl reductase; part of the gene cluster that mediates the biosynthesis of azaterrilone A and other azaphilones, a class of fungal metabolites characterized by a highly oxygenated pyrano-quinone bicyclic core and exhibiting a broad range of bioactivities. The first step of the pathway begins with the non-reducing polyketide synthase tazA that assembles one acetyl-CoA starter unit, five malonyl-CoA units, and catalyzes a series of Claisen condensations, methylation, PT-mediated cyclization, and finally releases the first hexaketide precursor through the R-domain. The tazA product then undergoes reduction on its terminal ketone and the following pyran-ring formation by yet undetermined enzyme(s). Dehydration and enoyl reduction, possibly involving the trans-enoyl reductase tazE leads to the next intermediate. TazD is predicted as an acetyltransferase and might catalyze the acetylation steps leading to the synthesis of azaterrilone A. Azaterrilone A is not the final product of the taz pathway and both the highly reducing polyketide synthase tazB and the dual enzyme tazHJ catalyze late steps of the pathway, leading to the production of the 2 final stereoisomers that contain additional polyketide modification whose structures have still to be determined. The chain is Trans-enoyl reductase tazE from Aspergillus terreus (strain NIH 2624 / FGSC A1156).